We begin with the raw amino-acid sequence, 299 residues long: Tetrahydromethanopterin S-methyltransferase subunit E (299 aa).

The next 6 helical transmembrane spans lie at 57 to 79 (AISG…AWAL), 89 to 111 (AIIV…AFLG), 132 to 154 (HIGP…AYLA), 164 to 183 (LPLV…SSTG), 227 to 246 (FCSR…IIFL), and 261 to 283 (LVTK…AVIN).

This sequence belongs to the MtrE family. In terms of assembly, the complex is composed of 8 subunits; MtrA, MtrB, MtrC, MtrD, MtrE, MtrF, MtrG and MtrH.

It is found in the cell membrane. It catalyses the reaction 5-methyl-5,6,7,8-tetrahydromethanopterin + coenzyme M + 2 Na(+)(in) = 5,6,7,8-tetrahydromethanopterin + methyl-coenzyme M + 2 Na(+)(out). It functions in the pathway one-carbon metabolism; methanogenesis from CO(2); methyl-coenzyme M from 5,10-methylene-5,6,7,8-tetrahydromethanopterin: step 2/2. Part of a complex that catalyzes the formation of methyl-coenzyme M and tetrahydromethanopterin from coenzyme M and methyl-tetrahydromethanopterin. This is an energy-conserving, sodium-ion translocating step. This Methanococcus maripaludis (strain DSM 14266 / JCM 13030 / NBRC 101832 / S2 / LL) protein is Tetrahydromethanopterin S-methyltransferase subunit E.